The chain runs to 488 residues: Probable glycine dehydrogenase (decarboxylating) subunit 2 (488 aa).

Lys-273 is modified (N6-(pyridoxal phosphate)lysine).

It belongs to the GcvP family. C-terminal subunit subfamily. The glycine cleavage system is composed of four proteins: P, T, L and H. In this organism, the P 'protein' is a heterodimer of two subunits. It depends on pyridoxal 5'-phosphate as a cofactor.

It carries out the reaction N(6)-[(R)-lipoyl]-L-lysyl-[glycine-cleavage complex H protein] + glycine + H(+) = N(6)-[(R)-S(8)-aminomethyldihydrolipoyl]-L-lysyl-[glycine-cleavage complex H protein] + CO2. Its function is as follows. The glycine cleavage system catalyzes the degradation of glycine. The P protein binds the alpha-amino group of glycine through its pyridoxal phosphate cofactor; CO(2) is released and the remaining methylamine moiety is then transferred to the lipoamide cofactor of the H protein. This Halalkalibacterium halodurans (strain ATCC BAA-125 / DSM 18197 / FERM 7344 / JCM 9153 / C-125) (Bacillus halodurans) protein is Probable glycine dehydrogenase (decarboxylating) subunit 2.